A 104-amino-acid chain; its full sequence is SOSS complex subunit C (104 aa).

An N-acetylalanine modification is found at alanine 2.

Belongs to the SOSS-C family. Component of the SOSS complex, composed of SOSS-B (SOSS-B1/NABP2 or SOSS-B2/NABP1), SOSS-A/INTS3 and SOSS-C/INIP. SOSS complexes containing SOSS-B1/NABP2 are more abundant than complexes containing SOSS-B2/NABP1. Interacts with INTS3; the interaction is direct.

The protein localises to the nucleus. Functionally, component of the SOSS complex, a multiprotein complex that functions downstream of the MRN complex to promote DNA repair and G2/M checkpoint. The SOSS complex associates with single-stranded DNA at DNA lesions and influences diverse endpoints in the cellular DNA damage response including cell-cycle checkpoint activation, recombinational repair and maintenance of genomic stability. Required for efficient homologous recombination-dependent repair of double-strand breaks (DSBs) and ATM-dependent signaling pathways. This is SOSS complex subunit C (INIP) from Bos taurus (Bovine).